Consider the following 167-residue polypeptide: L-alanine exporter AlaE (167 aa).

The next 4 helical transmembrane spans lie at 25 to 45 (GTEF…TGII), 50 to 70 (IAGM…ALMI), 105 to 125 (FQVP…GGLV), and 129 to 149 (LGAA…LNWV).

Belongs to the AlaE exporter family.

Its subcellular location is the cell inner membrane. Exports L-alanine. In Pantoea sp. (strain At-9b), this protein is L-alanine exporter AlaE.